A 521-amino-acid polypeptide reads, in one-letter code: Acetylcholine receptor subunit delta (521 aa).

The signal sequence occupies residues 1–21 (MAWIWISLLLPILIYFPGCFS). The Extracellular segment spans residues 22 to 247 (ESEEERLLNH…ITFYLIIERK (226 aa)). N-linked (GlcNAc...) asparagine glycosylation is found at Asn53 and Asn164. A disulfide bridge connects residues Cys151 and Cys165. A run of 3 helical transmembrane segments spans residues 248–272 (PLFYIINILAPCVLIALMANLVFYL), 280–297 (MTLAISVLLAQSVFLLLI), and 314–335 (YLMFIMVLVTIVVVSCVIVLNL). Over 336 to 475 (HFRTPSTHAI…WYRIARTVDR (140 aa)) the chain is Cytoplasmic. The residue at position 394 (Tyr394) is a Phosphotyrosine; by Tyr-kinases. A helical transmembrane segment spans residues 476–494 (LCLFLVTPVMIIGTLWIFL).

The protein belongs to the ligand-gated ion channel (TC 1.A.9) family. Acetylcholine receptor (TC 1.A.9.1) subfamily. In terms of assembly, pentamer of two alpha chains, and one each of the beta, delta, and gamma (in immature muscle) or epsilon (in mature muscle) chains.

Its subcellular location is the postsynaptic cell membrane. The protein localises to the cell membrane. The catalysed reaction is K(+)(in) = K(+)(out). The enzyme catalyses Na(+)(in) = Na(+)(out). In terms of biological role, after binding acetylcholine, the AChR responds by an extensive change in conformation that affects all subunits and leads to opening of an ion-conducting channel across the plasma membrane. The sequence is that of Acetylcholine receptor subunit delta (chrnd) from Xenopus laevis (African clawed frog).